Reading from the N-terminus, the 20-residue chain is Antimicrobial peptide EP-20 (20 aa).

The segment at glutamate 1 to proline 20 is disordered.

The protein resides in the secreted. Its function is as follows. The synthetic peptide inhibits growth of fungus P.capsici and partially that of V.dahliae, F.graminearum and F.omysporum. This is Antimicrobial peptide EP-20 from Xenorhabdus budapestensis.